Reading from the N-terminus, the 431-residue chain is Na(+)-translocating NADH-quinone reductase subunit F (431 aa).

The helical transmembrane segment at 10–30 threads the bilayer; the sequence is IFVASAAFCSLGLILVAVILL. The region spanning 41-133 is the 2Fe-2S ferredoxin-type domain; that stretch reads CKLKINNDDS…DLCLEVEERY (93 aa). Cysteine 76, cysteine 82, cysteine 85, and cysteine 117 together coordinate [2Fe-2S] cluster. In terms of domain architecture, FAD-binding FR-type spans 136–286; the sequence is ASSWEGTVVS…SGPYGESFMK (151 aa). Positions 289–413 are catalytic; the sequence is NRPVIFLIGG…ALHNSSILTL (125 aa).

It belongs to the NqrF family. Composed of six subunits; NqrA, NqrB, NqrC, NqrD, NqrE and NqrF. [2Fe-2S] cluster serves as cofactor. FAD is required as a cofactor.

Its subcellular location is the cell inner membrane. The enzyme catalyses a ubiquinone + n Na(+)(in) + NADH + H(+) = a ubiquinol + n Na(+)(out) + NAD(+). NQR complex catalyzes the reduction of ubiquinone-1 to ubiquinol by two successive reactions, coupled with the transport of Na(+) ions from the cytoplasm to the periplasm. The first step is catalyzed by NqrF, which accepts electrons from NADH and reduces ubiquinone-1 to ubisemiquinone by a one-electron transfer pathway. This Chlamydia trachomatis serovar D (strain ATCC VR-885 / DSM 19411 / UW-3/Cx) protein is Na(+)-translocating NADH-quinone reductase subunit F.